A 354-amino-acid polypeptide reads, in one-letter code: ATP-dependent (S)-NAD(P)H-hydrate dehydratase (354 aa).

Residues alanine 42 to isoleucine 350 enclose the YjeF C-terminal domain. Residues glycine 155 and asparagine 208–arginine 214 contribute to the (6S)-NADPHX site. ATP contacts are provided by residues lysine 248 to aspartate 252 and glycine 267 to glycine 276. Aspartate 277 is a (6S)-NADPHX binding site.

This sequence belongs to the NnrD/CARKD family. Mg(2+) serves as cofactor.

It catalyses the reaction (6S)-NADHX + ATP = ADP + phosphate + NADH + H(+). The catalysed reaction is (6S)-NADPHX + ATP = ADP + phosphate + NADPH + H(+). Functionally, catalyzes the dehydration of the S-form of NAD(P)HX at the expense of ATP, which is converted to ADP. Together with NAD(P)HX epimerase, which catalyzes the epimerization of the S- and R-forms, the enzyme allows the repair of both epimers of NAD(P)HX, a damaged form of NAD(P)H that is a result of enzymatic or heat-dependent hydration. This chain is ATP-dependent (S)-NAD(P)H-hydrate dehydratase, found in Vitis vinifera (Grape).